Reading from the N-terminus, the 224-residue chain is Giant hemoglobin linker AV-1 chain (224 aa).

In terms of domain architecture, LDL-receptor class A spans 62 to 103 (HWCPSKYHRCGNSPQCMSNMAFCDGVNDCKNHFDEDENRCVV). Intrachain disulfides connect Cys64/Cys77, Cys71/Cys90, and Cys84/Cys101. An N-linked (GlcNAc...) asparagine glycan is attached at Asn108.

As to quaternary structure, giant hemoglobin is composed of four heme-containing chains (AI to AIV), and two linker chains (AV and AVI).

In terms of biological role, acts as a linker for the assembly of heme-containing chains in the construction of giant hemoglobin. In Lamellibrachia sp. (Deep-sea giant tube worm), this protein is Giant hemoglobin linker AV-1 chain.